Consider the following 676-residue polypeptide: ATP-dependent zinc metalloprotease FtsH (676 aa).

Residues 1-12 (MSFFDKIFKKFH) are Cytoplasmic-facing. A helical transmembrane segment spans residues 13–33 (MGVLYFAVILIGATFIYCYFT). Over 34–115 (KHEKKDNNTF…DPRPWNGYEH (82 aa)) the chain is Extracellular. The chain crosses the membrane as a helical span at residues 116–136 (VFWVFRQCLTMLFFYCFFLFF). Topologically, residues 137–676 (ADTIKQMGQE…EVLSTDSEQT (540 aa)) are cytoplasmic. ATP is bound at residue 212–219 (GPPGTGKT). H433 is a binding site for Zn(2+). The active site involves E434. Zn(2+) contacts are provided by H437 and D509. The disordered stretch occupies residues 610 to 676 (EKEETNAPTQ…EVLSTDSEQT (67 aa)). Residues 615–636 (NAPTQTTSQMSSNNETTNTDKT) show a composition bias toward polar residues. Low complexity predominate over residues 650-667 (NQESNESNPNNNEKASPE).

It in the central section; belongs to the AAA ATPase family. This sequence in the C-terminal section; belongs to the peptidase M41 family. In terms of assembly, homohexamer. Requires Zn(2+) as cofactor.

It is found in the cell membrane. In terms of biological role, acts as a processive, ATP-dependent zinc metallopeptidase for both cytoplasmic and membrane proteins. Plays a role in the quality control of integral membrane proteins. The polypeptide is ATP-dependent zinc metalloprotease FtsH (Aster yellows witches'-broom phytoplasma (strain AYWB)).